We begin with the raw amino-acid sequence, 180 residues long: MAALLMPRRNKGMRTRLGCLSHKSDSCSDFTAILPDKPNRALKRLSTEEATRWAESFDVLLSHKYGVAAFRAFLKTEFSEENLEFWLACEEFKKTRSTAKLVTKAHRIFEEFVDVQAPREVNIDFQTREATRKNMQEPSLTCFDQAQGKVHSLMEKDSYPRFLRSKMYLDLLSQSQRRLS.

The residue at position 26 (serine 26) is a Phosphoserine. Residues 56-171 enclose the RGS domain; the sequence is SFDVLLSHKY…FLRSKMYLDL (116 aa).

Interacts with GNAO1 and GNAI3.

It localises to the cell membrane. It is found in the membrane. Its subcellular location is the perikaryon. The protein localises to the cell projection. The protein resides in the dendrite. It localises to the nucleus. Regulates G protein-coupled receptor signaling cascades, including signaling via muscarinic acetylcholine receptor CHRM2 and dopamine receptor DRD2. Inhibits signal transduction by increasing the GTPase activity of G protein alpha subunits, thereby driving them into their inactive GDP-bound form. Modulates the activity of potassium channels that are activated in response to DRD2 and CHRM2 signaling. The sequence is that of Regulator of G-protein signaling 8 (Rgs8) from Mus musculus (Mouse).